The following is a 380-amino-acid chain: Glutamate 5-kinase (380 aa).

Lys15 contributes to the ATP binding site. The substrate site is built by Ser59, Asp146, and Asn158. ATP is bound at residue 178 to 179; sequence TD. In terms of domain architecture, PUA spans 285-363; it reads RGSVTVDAGA…AEFERLLGYA (79 aa).

This sequence belongs to the glutamate 5-kinase family.

It is found in the cytoplasm. It carries out the reaction L-glutamate + ATP = L-glutamyl 5-phosphate + ADP. Its pathway is amino-acid biosynthesis; L-proline biosynthesis; L-glutamate 5-semialdehyde from L-glutamate: step 1/2. Functionally, catalyzes the transfer of a phosphate group to glutamate to form L-glutamate 5-phosphate. The chain is Glutamate 5-kinase from Acidovorax ebreus (strain TPSY) (Diaphorobacter sp. (strain TPSY)).